Reading from the N-terminus, the 114-residue chain is Putative protein TfaS (114 aa).

This sequence belongs to the tfa family.

This chain is Putative protein TfaS (tfaS), found in Escherichia coli (strain K12).